Reading from the N-terminus, the 305-residue chain is tRNA N6-adenosine threonylcarbamoyltransferase (305 aa).

The Fe cation site is built by His108 and His112. Substrate is bound by residues 130 to 134 (VVSGG), Asp163, Gly176, Asp180, and Asn264. Asp288 lines the Fe cation pocket.

Belongs to the KAE1 / TsaD family. It depends on Fe(2+) as a cofactor.

It is found in the cytoplasm. It catalyses the reaction L-threonylcarbamoyladenylate + adenosine(37) in tRNA = N(6)-L-threonylcarbamoyladenosine(37) in tRNA + AMP + H(+). Required for the formation of a threonylcarbamoyl group on adenosine at position 37 (t(6)A37) in tRNAs that read codons beginning with adenine. Is involved in the transfer of the threonylcarbamoyl moiety of threonylcarbamoyl-AMP (TC-AMP) to the N6 group of A37, together with TsaE and TsaB. TsaD likely plays a direct catalytic role in this reaction. The chain is tRNA N6-adenosine threonylcarbamoyltransferase from Mycoplasma mobile (strain ATCC 43663 / 163K / NCTC 11711) (Mesomycoplasma mobile).